A 703-amino-acid polypeptide reads, in one-letter code: Calcium-responsive transcription factor (703 aa).

3 disordered regions span residues 1-61 (MEQS…QNIP), 130-150 (GPLV…SDRN), and 517-539 (GNSQ…SLSP). The span at 9 to 22 (KVNHNDSEESKTDS) shows a compositional bias: basic and acidic residues. Polar residues predominate over residues 23-34 (QHLTYMDSSEPS).

Its subcellular location is the nucleus. Its function is as follows. Acts as a transcriptional activator that mediates the calcium- and neuron-selective induction of BDNF exon III transcription. Binds to the consensus calcium-response element CaRE1 5'-CTATTTCGAG-3' sequence. The polypeptide is Calcium-responsive transcription factor (CARF) (Bos taurus (Bovine)).